The chain runs to 811 residues: Glycerol-3-phosphate acyltransferase (811 aa).

The HXXXXD motif signature appears at 309–314 (HRSHMD).

The protein belongs to the GPAT/DAPAT family.

The protein localises to the cell inner membrane. The enzyme catalyses sn-glycerol 3-phosphate + an acyl-CoA = a 1-acyl-sn-glycero-3-phosphate + CoA. It functions in the pathway phospholipid metabolism; CDP-diacylglycerol biosynthesis; CDP-diacylglycerol from sn-glycerol 3-phosphate: step 1/3. This Vibrio cholerae serotype O1 (strain ATCC 39315 / El Tor Inaba N16961) protein is Glycerol-3-phosphate acyltransferase (plsB).